We begin with the raw amino-acid sequence, 248 residues long: Probable 2-oxo-3-(5-oxofuran-2-ylidene)propanoate lactonase (248 aa).

Catalysis depends on residues cysteine 123, aspartate 180, and histidine 212.

It belongs to the dienelactone hydrolase family.

It carries out the reaction 2-oxo-3-(5-oxofuran-2-ylidene)propanoate + H2O = 3-maleylpyruvate + H(+). Involved in the 5-nitroanthranilic acid (5NAA) degradation. Catalyzes the hydrolysis of the lactone to produce maleylpyruvate biodegradation of 5-nitroanthranilate. In Bradyrhizobium sp, this protein is Probable 2-oxo-3-(5-oxofuran-2-ylidene)propanoate lactonase (naaC).